A 288-amino-acid chain; its full sequence is Protein RepA (288 aa).

Belongs to the initiator RepB protein family.

Its function is as follows. This protein is essential for plasmid replication; it is involved in copy control functions. The protein is Protein RepA (repA) of Escherichia coli.